We begin with the raw amino-acid sequence, 629 residues long: Bifunctional protein ArgHA (629 aa).

Residues 1–499 (MALWGGRFSQ…NLPRSRSDLV (499 aa)) are argininosuccinate lyase. The 135-residue stretch at 464 to 598 (ISIRAARLTD…EKVLKDCDMC (135 aa)) folds into the N-acetyltransferase domain. The amino-acid acetyltransferase stretch occupies residues 500–629 (KAVGTFAVTE…INLKAEKLAS (130 aa)).

The protein in the N-terminal section; belongs to the lyase 1 family. Argininosuccinate lyase subfamily. It in the C-terminal section; belongs to the acetyltransferase family. ArgA subfamily.

It localises to the cytoplasm. It catalyses the reaction 2-(N(omega)-L-arginino)succinate = fumarate + L-arginine. The catalysed reaction is L-glutamate + acetyl-CoA = N-acetyl-L-glutamate + CoA + H(+). The protein operates within amino-acid biosynthesis; L-arginine biosynthesis; N(2)-acetyl-L-ornithine from L-glutamate: step 1/4. Its pathway is amino-acid biosynthesis; L-arginine biosynthesis; L-arginine from L-ornithine and carbamoyl phosphate: step 3/3. The protein is Bifunctional protein ArgHA (argHA) of Moritella abyssi.